Reading from the N-terminus, the 150-residue chain is Large ribosomal subunit protein bL9 (150 aa).

This sequence belongs to the bacterial ribosomal protein bL9 family.

Its function is as follows. Binds to the 23S rRNA. The chain is Large ribosomal subunit protein bL9 from Sodalis glossinidius (strain morsitans).